Reading from the N-terminus, the 295-residue chain is MVLPSMNKSVEAISNNHLQQPNKFPLINGLADVRDYYVANCLLFKLNKGSLRIENEFGEFIEQSALCLFLLEKDQTITLSMSEIEGHIDFSSLEVSYDLMQKFYKVFYSTRNYNDRELSLKTKPKYFFHADLLPGMSDTFDSILHGVACPRVCSNVSIDDHDYSYFSLMYLISAFVRKPGGFDFLERAIKITTKEKVYNIIISDLTRKWSQAEVAGKLFMSVSSLKRKLAAEEVSFSKIYLDARMNQAIKLLRMGAGNISQVATMCGYDTPSYFIAIFKRHFKITPLSFMRTMNH.

Positions 195 to 292 (EKVYNIIISD…KITPLSFMRT (98 aa)) constitute an HTH araC/xylS-type domain. 2 DNA-binding regions (H-T-H motif) span residues 212–233 (AEVAGKLFMSVSSLKRKLAAEE) and 259–282 (ISQVATMCGYDTPSYFIAIFKRHF).

Its function is as follows. Positive regulator of the expression of the invasion-associated type III secretion system encoded within SPI-1 (pathogenicity island 1). This is Transcriptional regulator SirC (sirC) from Salmonella typhi.